We begin with the raw amino-acid sequence, 164 residues long: Aspartate carbamoyltransferase regulatory chain (164 aa).

The Zn(2+) site is built by Cys-116, Cys-121, Cys-146, and Cys-149.

The protein belongs to the PyrI family. Contains catalytic and regulatory chains. The cofactor is Zn(2+).

Involved in allosteric regulation of aspartate carbamoyltransferase. This Staphylothermus marinus (strain ATCC 43588 / DSM 3639 / JCM 9404 / F1) protein is Aspartate carbamoyltransferase regulatory chain.